A 223-amino-acid polypeptide reads, in one-letter code: MVDNKQDVVAEFKLVLVGDGGVGKTTFVTRHQTGEFEKRYIATQGVNVSNMILHTTKGAIRFNIWDTAGQEKLGGLREGYYIGADAAIMMFDVTSRITYKNIPKWHKDLTRICENVPIVLVGNKVDSKDSKVKARQITFHRKRSLQYYDVSAKSNYQYEKPFLWILRKLTGDPNLNLVEGIALAPVDIHMTEDQIKQLQMEHDEAMNLAQQGQLPDEEDDEFN.

The 165-residue stretch at valine 8–aspartate 172 folds into the Small GTPase Ran-type domain. Aspartate 19–threonine 26 serves as a coordination point for GTP. The interval lysine 38 to valine 46 is switch-I. GTP-binding positions include glycine 69, asparagine 123 to aspartate 126, and serine 151 to lysine 153. Residues glycine 69 to aspartate 85 are switch-II.

It belongs to the small GTPase superfamily. Ran family. In terms of assembly, monomer. Found in a nuclear export complex with RanGTP, exportin and pre-miRNA.

It localises to the nucleus. Functionally, GTP-binding protein involved in nucleocytoplasmic transport. Required for the import of protein into the nucleus and also for RNA export. Involved in chromatin condensation and control of cell cycle. The chain is GTP-binding nuclear protein Ran from Tetrahymena pyriformis.